Reading from the N-terminus, the 277-residue chain is Large ribosomal subunit protein uL2 (277 aa).

Residues 215–277 are disordered; that stretch reads GIRPTVRGSV…KLIVKRRNDK (63 aa). The span at 264–277 shows a compositional bias: basic and acidic residues; sequence KYSDKLIVKRRNDK.

This sequence belongs to the universal ribosomal protein uL2 family. Part of the 50S ribosomal subunit. Forms a bridge to the 30S subunit in the 70S ribosome.

One of the primary rRNA binding proteins. Required for association of the 30S and 50S subunits to form the 70S ribosome, for tRNA binding and peptide bond formation. It has been suggested to have peptidyltransferase activity; this is somewhat controversial. Makes several contacts with the 16S rRNA in the 70S ribosome. The polypeptide is Large ribosomal subunit protein uL2 (Clostridium acetobutylicum (strain ATCC 824 / DSM 792 / JCM 1419 / IAM 19013 / LMG 5710 / NBRC 13948 / NRRL B-527 / VKM B-1787 / 2291 / W)).